Consider the following 390-residue polypeptide: 4-hydroxy-3-methylbut-2-en-1-yl diphosphate synthase (flavodoxin) (390 aa).

Positions 281, 284, 316, and 323 each coordinate [4Fe-4S] cluster.

It belongs to the IspG family. The cofactor is [4Fe-4S] cluster.

It carries out the reaction (2E)-4-hydroxy-3-methylbut-2-enyl diphosphate + oxidized [flavodoxin] + H2O + 2 H(+) = 2-C-methyl-D-erythritol 2,4-cyclic diphosphate + reduced [flavodoxin]. Its pathway is isoprenoid biosynthesis; isopentenyl diphosphate biosynthesis via DXP pathway; isopentenyl diphosphate from 1-deoxy-D-xylulose 5-phosphate: step 5/6. Converts 2C-methyl-D-erythritol 2,4-cyclodiphosphate (ME-2,4cPP) into 1-hydroxy-2-methyl-2-(E)-butenyl 4-diphosphate. This is 4-hydroxy-3-methylbut-2-en-1-yl diphosphate synthase (flavodoxin) from Salinispora arenicola (strain CNS-205).